Consider the following 239-residue polypeptide: Uridylate kinase (239 aa).

12-15 is a binding site for ATP; sequence KLSG. Residues 20-25 are involved in allosteric activation by GTP; that stretch reads GDQGYG. Gly54 lines the UMP pocket. Residues Gly55 and Arg59 each coordinate ATP. UMP-binding positions include Asp74 and 135 to 142; that span reads TGNPYFTT. Thr162, Tyr168, and Asp171 together coordinate ATP.

Belongs to the UMP kinase family. Homohexamer.

It localises to the cytoplasm. The catalysed reaction is UMP + ATP = UDP + ADP. It participates in pyrimidine metabolism; CTP biosynthesis via de novo pathway; UDP from UMP (UMPK route): step 1/1. Allosterically activated by GTP. Inhibited by UTP. Functionally, catalyzes the reversible phosphorylation of UMP to UDP. The chain is Uridylate kinase from Geobacter metallireducens (strain ATCC 53774 / DSM 7210 / GS-15).